We begin with the raw amino-acid sequence, 291 residues long: 33 kDa chaperonin (291 aa).

Disulfide bonds link Cys-237–Cys-239 and Cys-270–Cys-273.

The protein belongs to the HSP33 family. Under oxidizing conditions two disulfide bonds are formed involving the reactive cysteines. Under reducing conditions zinc is bound to the reactive cysteines and the protein is inactive.

Its subcellular location is the cytoplasm. In terms of biological role, redox regulated molecular chaperone. Protects both thermally unfolding and oxidatively damaged proteins from irreversible aggregation. Plays an important role in the bacterial defense system toward oxidative stress. This Clostridioides difficile (strain 630) (Peptoclostridium difficile) protein is 33 kDa chaperonin.